The primary structure comprises 276 residues: MHPAAEHSPLGKSSEYIATYTPSLLFPIPRAAKWAELGLTAQTLPYKGVDFWNCYELSWLLPSGKPVVAIAEFSIPADSPNIIESKSFKLYLNSLNQTAFDGAARVQATLEKDLSAAAGKLVGVRIRNLAEIEEEGVAVLPGVCIDELDITVSSYDQPQPELLRCDDSQVIEEAVHSHLLKSNCPVTSQPDWGSVVVEYRGAALDHASLLAYIVSFRQHSDFHEQCVERIFLDLQRLLKPEKLTVYARYVRRGGLDINPYRSTEVLDVDNRRLARQ.

83–85 lines the substrate pocket; it reads IES. 85-86 provides a ligand contact to NADPH; the sequence is SK. The Thioimide intermediate role is filled by C184. Residue D191 is the Proton donor of the active site. A substrate-binding site is contributed by 223-224; sequence HE. 252–253 is an NADPH binding site; it reads RG.

Belongs to the GTP cyclohydrolase I family. QueF type 2 subfamily. Homodimer.

The protein resides in the cytoplasm. It catalyses the reaction 7-aminomethyl-7-carbaguanine + 2 NADP(+) = 7-cyano-7-deazaguanine + 2 NADPH + 3 H(+). The protein operates within tRNA modification; tRNA-queuosine biosynthesis. Functionally, catalyzes the NADPH-dependent reduction of 7-cyano-7-deazaguanine (preQ0) to 7-aminomethyl-7-deazaguanine (preQ1). This chain is NADPH-dependent 7-cyano-7-deazaguanine reductase, found in Pseudomonas syringae pv. tomato (strain ATCC BAA-871 / DC3000).